The following is a 378-amino-acid chain: Chaperone protein DnaJ (378 aa).

In terms of domain architecture, J spans 5 to 69 (EYYDRLGVSK…QKRAAYDQYG (65 aa)). The CR-type zinc-finger motif lies at 134–216 (GVEKEVSYNR…CHGTGHEKQA (83 aa)). Positions 147, 150, 164, 167, 190, 193, 204, and 207 each coordinate Zn(2+). CXXCXGXG motif repeat units lie at residues 147 to 154 (CGTCLGSG), 164 to 171 (CRKCHGSG), 190 to 197 (CDICHGSG), and 204 to 211 (CQTCHGTG).

This sequence belongs to the DnaJ family. In terms of assembly, homodimer. Zn(2+) serves as cofactor.

Its subcellular location is the cytoplasm. In terms of biological role, participates actively in the response to hyperosmotic and heat shock by preventing the aggregation of stress-denatured proteins and by disaggregating proteins, also in an autonomous, DnaK-independent fashion. Unfolded proteins bind initially to DnaJ; upon interaction with the DnaJ-bound protein, DnaK hydrolyzes its bound ATP, resulting in the formation of a stable complex. GrpE releases ADP from DnaK; ATP binding to DnaK triggers the release of the substrate protein, thus completing the reaction cycle. Several rounds of ATP-dependent interactions between DnaJ, DnaK and GrpE are required for fully efficient folding. Also involved, together with DnaK and GrpE, in the DNA replication of plasmids through activation of initiation proteins. The sequence is that of Chaperone protein DnaJ from Streptococcus pyogenes serotype M1.